Reading from the N-terminus, the 66-residue chain is Large ribosomal subunit protein bL35 (66 aa).

Basic residues-rich tracts occupy residues 1-15 (MSKL…KRFK) and 22-43 (ILHK…RKRR). The disordered stretch occupies residues 1 to 43 (MSKLKTRSSAAKRFKVTATGKILHKKAGKRHNLSKKSESRKRR).

It belongs to the bacterial ribosomal protein bL35 family.

This Dictyoglomus turgidum (strain DSM 6724 / Z-1310) protein is Large ribosomal subunit protein bL35.